A 697-amino-acid chain; its full sequence is Pentatricopeptide repeat-containing protein 1, mitochondrial (697 aa).

The N-terminal 36 residues, 1 to 36, are a transit peptide targeting the mitochondrion; it reads MLKRAHYVALHVTLNHNGLSYQRVFSCLTQFPMLRH. 2 PPR repeats span residues 257-288 and 294-328; these read RPFT…VKNK and SDVF…NVNF.

The protein localises to the mitochondrion. In terms of biological role, mitochondrial RNA-binding protein required for the stability of the cox2 and cox3 mRNAs. The polypeptide is Pentatricopeptide repeat-containing protein 1, mitochondrial (ppr1) (Schizosaccharomyces pombe (strain 972 / ATCC 24843) (Fission yeast)).